A 589-amino-acid polypeptide reads, in one-letter code: Phenylalanine--tRNA ligase beta subunit (589 aa).

In terms of domain architecture, B5 spans 302–377 (LEVREERISV…IAYGYNNIKK (76 aa)). Positions 355, 361, 364, and 365 each coordinate Mg(2+).

It belongs to the phenylalanyl-tRNA synthetase beta subunit family. Type 2 subfamily. Tetramer of two alpha and two beta subunits. Mg(2+) serves as cofactor.

Its subcellular location is the cytoplasm. It catalyses the reaction tRNA(Phe) + L-phenylalanine + ATP = L-phenylalanyl-tRNA(Phe) + AMP + diphosphate + H(+). In Drosophila melanogaster (Fruit fly), this protein is Phenylalanine--tRNA ligase beta subunit.